A 274-amino-acid polypeptide reads, in one-letter code: Acetylaranotin bis-thiomethyltransferase (274 aa).

Belongs to the class I-like SAM-binding methyltransferase superfamily.

Its pathway is mycotoxin biosynthesis. Acetylaranotin bis-thiomethyltransferase involved in the biosynthesis of acetylaranotin derivatives, members of the epipolythiodioxopiperazine (ETP) class of toxins characterized by a disulfide-bridged cyclic dipeptide. The first step of acetylaranotin biosynthesis is performed by the NRPS ataP which produces diketopiperazine cyclo-L-Phe-L-Phe via the condensation of 2 phenylalanines (L-Phe). The ataC domain of ataTC then catalyzes the formation of bishydroxylation of cyclo-L-Phe-L-Phe. The glutathione S-transferase domain ataG in ataIMG further catalyzes the conjugation of two glutathiones to the bishydroxylated intermediate. Next, the dipeptidase ataJ removes the Glu residues. The following step is performed by the carbon sulfur lyase domain ataI of ataIMG which may convert the bis-cysteinyl adduct to yield an epidithiol intermediate. The ataT domain from ataTC then catalyzes the oxidation of the free dithiols, followed by a cyclization step catalyzed by the cytochrome P450 ataF. AtaF probably acts as an epoxidase to promote a dual epoxidation formation at C8 and C9 along with C8' and C9', followed by the spontaneous nucleophilic attack of the amide nitrogens N10 and N10' to yield an intermediate with the pyrrolidine partial structure. The final steps of acetylaranotin biosynthesis involve the acetylation and ring rearrangement of an epitetrathiodiketopiperazine intermediate to produce acetylaranotin. AtaH probably catalyzes the acetylation of epitetrathiodiketopiperazine to produce a diacetate and ataY is responsible for the formation of the dihydrooxepin moiety that converts the diacetate intermediate to acetylaranotin via acetylapoaranotin. Both enzymes could function independently in the absence of the other. The acetylaranotin bis-thiomethyltransferase ataS located outside of acetylaranotin gene cluster is the main thiomethyltransferase responsible for converting acetylaranotin and its related intermediates to their methylated forms. The chain is Acetylaranotin bis-thiomethyltransferase from Aspergillus terreus (strain NIH 2624 / FGSC A1156).